A 609-amino-acid polypeptide reads, in one-letter code: Alpha-fetoprotein (609 aa).

Residues 1-18 (MKWVESIFLIFLLNFTES) form the signal peptide. Albumin domains follow at residues 19-210 (RTLH…ATVT), 211-402 (KELR…EELQ), and 403-601 (KYIQ…KLIS). Cu(2+) is bound at residue His-22. 8 cysteine pairs are disulfide-bonded: Cys-99-Cys-114, Cys-113-Cys-124, Cys-148-Cys-193, Cys-192-Cys-201, Cys-224-Cys-270, Cys-269-Cys-277, Cys-289-Cys-303, and Cys-302-Cys-313. Phosphoserine occurs at positions 111, 115, and 117. Residue Asn-251 is glycosylated (N-linked (GlcNAc...) asparagine). Ser-344 bears the Phosphoserine mark. Cystine bridges form between Cys-384–Cys-393, Cys-416–Cys-462, Cys-461–Cys-472, Cys-485–Cys-501, Cys-500–Cys-511, Cys-538–Cys-583, and Cys-582–Cys-591. Ser-444 bears the Phosphoserine mark.

Belongs to the ALB/AFP/VDB family. Dimeric and trimeric forms have been found in addition to the monomeric form. Post-translationally, sulfated. Plasma.

The protein resides in the secreted. Functionally, binds copper, nickel, and fatty acids as well as, and bilirubin less well than, serum albumin. The polypeptide is Alpha-fetoprotein (AFP) (Gorilla gorilla gorilla (Western lowland gorilla)).